A 525-amino-acid polypeptide reads, in one-letter code: Sensory neuron membrane protein 1 (525 aa).

The Cytoplasmic portion of the chain corresponds to 1–11 (MLLPKELKYAA). The helical transmembrane segment at 12–32 (IAGGVAVFGLIFGWVLFPVIL) threads the bilayer. The Extracellular segment spans residues 33–456 (KGQLKKEMAL…LKHQLFIPKR (424 aa)). Residues asparagine 67, asparagine 229, and asparagine 324 are each glycosylated (N-linked (GlcNAc...) asparagine). 3 cysteine pairs are disulfide-bonded: cysteine 268–cysteine 333, cysteine 297–cysteine 352, and cysteine 335–cysteine 341. Asparagine 440 is a glycosylation site (N-linked (GlcNAc...) asparagine). Residues 457–477 (VVGVLRWWMVSFGSLGADIGI) traverse the membrane as a helical segment. Residues 478–525 (VYHFRDHIMRLAVSGDTKVSKVTPEEDPEQKDISVIGPPAQEPAKINI) are Cytoplasmic-facing. Positions 497–525 (SKVTPEEDPEQKDISVIGPPAQEPAKINI) are disordered.

This sequence belongs to the CD36 family.

The protein localises to the cell membrane. Plays an olfactory role that is not restricted to pheromone sensitivity. The protein is Sensory neuron membrane protein 1 of Mamestra brassicae (Cabbage moth).